Consider the following 528-residue polypeptide: Peptide chain release factor 3 (528 aa).

Residues 10–278 enclose the tr-type G domain; sequence DKRRTFGIIS…TFVDLAPAPQ (269 aa). GTP contacts are provided by residues 19 to 26, 87 to 91, and 141 to 144; these read SHPDAGKT, DTPGH, and NKLD.

The protein belongs to the TRAFAC class translation factor GTPase superfamily. Classic translation factor GTPase family. PrfC subfamily.

It localises to the cytoplasm. Functionally, increases the formation of ribosomal termination complexes and stimulates activities of RF-1 and RF-2. It binds guanine nucleotides and has strong preference for UGA stop codons. It may interact directly with the ribosome. The stimulation of RF-1 and RF-2 is significantly reduced by GTP and GDP, but not by GMP. The sequence is that of Peptide chain release factor 3 from Oleidesulfovibrio alaskensis (strain ATCC BAA-1058 / DSM 17464 / G20) (Desulfovibrio alaskensis).